Consider the following 362-residue polypeptide: Chorismate synthase (362 aa).

NADP(+)-binding residues include Arg48 and Arg54. FMN contacts are provided by residues 131–133, 243–244, Gly287, 302–306, and Arg328; these read RSS, NA, and KPTSS.

This sequence belongs to the chorismate synthase family. As to quaternary structure, homotetramer. FMNH2 serves as cofactor.

It carries out the reaction 5-O-(1-carboxyvinyl)-3-phosphoshikimate = chorismate + phosphate. Its pathway is metabolic intermediate biosynthesis; chorismate biosynthesis; chorismate from D-erythrose 4-phosphate and phosphoenolpyruvate: step 7/7. Functionally, catalyzes the anti-1,4-elimination of the C-3 phosphate and the C-6 proR hydrogen from 5-enolpyruvylshikimate-3-phosphate (EPSP) to yield chorismate, which is the branch point compound that serves as the starting substrate for the three terminal pathways of aromatic amino acid biosynthesis. This reaction introduces a second double bond into the aromatic ring system. This chain is Chorismate synthase, found in Rhodopseudomonas palustris (strain TIE-1).